Consider the following 153-residue polypeptide: Glycosylation-dependent cell adhesion molecule 1 (153 aa).

An N-terminal signal peptide occupies residues 1–18; the sequence is MKFLCVLLLASLAATSLA. A glycan (O-linked (GalNAc...) threonine; partial) is linked at T34. Residues S47, S52, S56, S58, and S64 each carry the phosphoserine modification. O-linked (HexNAc...) serine glycosylation occurs at S78. N95 carries an N-linked (GlcNAc...) asparagine glycan. A disordered region spans residues 95 to 115; sequence NATLGSEETTEHTPSDASTTE. The O-linked (GalNAc...) threonine glycan is linked to T104.

This sequence belongs to the PP3/GlyCAM-1 family. In terms of tissue distribution, highly and specifically expressed in the lactating mammary gland.

It localises to the membrane. The polypeptide is Glycosylation-dependent cell adhesion molecule 1 (GLYCAM1) (Bos taurus (Bovine)).